The chain runs to 164 residues: Protein-export protein SecB (164 aa).

The protein belongs to the SecB family. Homotetramer, a dimer of dimers. One homotetramer interacts with 1 SecA dimer.

It is found in the cytoplasm. Functionally, one of the proteins required for the normal export of preproteins out of the cell cytoplasm. It is a molecular chaperone that binds to a subset of precursor proteins, maintaining them in a translocation-competent state. It also specifically binds to its receptor SecA. The chain is Protein-export protein SecB from Chromohalobacter salexigens (strain ATCC BAA-138 / DSM 3043 / CIP 106854 / NCIMB 13768 / 1H11).